Reading from the N-terminus, the 711-residue chain is Polyribonucleotide nucleotidyltransferase (711 aa).

Positions 486 and 492 each coordinate Mg(2+). One can recognise a KH domain in the interval 553-612; it reads PRIHTIKISTDKIKDVIGKGGSVIRALTEETGTTIEIEDDGTVKIAATDGEKAKYAIRRI. The region spanning 622-690 is the S1 motif domain; the sequence is GRIYNGKVTR…RQGRVRLSIK (69 aa). The interval 690 to 711 is disordered; the sequence is KEATEQSQPAAAPEAPASEQAE. Residues 694–711 are compositionally biased toward low complexity; sequence EQSQPAAAPEAPASEQAE.

The protein belongs to the polyribonucleotide nucleotidyltransferase family. In terms of assembly, component of the RNA degradosome, which is a multiprotein complex involved in RNA processing and mRNA degradation. Mg(2+) is required as a cofactor.

Its subcellular location is the cytoplasm. It carries out the reaction RNA(n+1) + phosphate = RNA(n) + a ribonucleoside 5'-diphosphate. Its function is as follows. Involved in mRNA degradation. Catalyzes the phosphorolysis of single-stranded polyribonucleotides processively in the 3'- to 5'-direction. This is Polyribonucleotide nucleotidyltransferase from Salmonella choleraesuis (strain SC-B67).